Reading from the N-terminus, the 505-residue chain is GMP synthase [glutamine-hydrolyzing] (505 aa).

One can recognise a Glutamine amidotransferase type-1 domain in the interval 3-190 (KVLVVNFGGQ…LRKIARISDV (188 aa)). The active-site Nucleophile is Cys-80. Active-site residues include His-164 and Glu-166. The region spanning 191–380 (WRPEDQITRI…LGLPEDVVYR (190 aa)) is the GMPS ATP-PPase domain. 218 to 224 (SGGVDST) provides a ligand contact to ATP.

It carries out the reaction XMP + L-glutamine + ATP + H2O = GMP + L-glutamate + AMP + diphosphate + 2 H(+). It participates in purine metabolism; GMP biosynthesis; GMP from XMP (L-Gln route): step 1/1. Its function is as follows. Catalyzes the synthesis of GMP from XMP. The sequence is that of GMP synthase [glutamine-hydrolyzing] from Pyrobaculum aerophilum (strain ATCC 51768 / DSM 7523 / JCM 9630 / CIP 104966 / NBRC 100827 / IM2).